The primary structure comprises 318 residues: Tumor necrosis factor ligand superfamily member 11 (318 aa).

Topologically, residues 1–47 (MRRANRDYGKYLRGSEEMGSCPGVPHEGPLHPAPSAPAPAPPPAASR) are cytoplasmic. The interval 13-41 (RGSEEMGSCPGVPHEGPLHPAPSAPAPAP) is disordered. Residues 31-41 (HPAPSAPAPAP) show a composition bias toward pro residues. A helical; Signal-anchor for type II membrane protein membrane pass occupies residues 48-68 (FMFLALLGLGLGQVVCSIALF). The Extracellular portion of the chain corresponds to 69–318 (LYFRAQMDPN…FGAFKVQDID (250 aa)). The region spanning 165-314 (PFAHLTINAA…DATYFGAFKV (150 aa)) is the THD domain. N199 and N264 each carry an N-linked (GlcNAc...) asparagine glycan.

Belongs to the tumor necrosis factor family. Homotrimer. Interacts with TNFRSF11A and TNFRSF11B. Interacts with FBN1 (via N-terminal domain) in a Ca(+2)-dependent manner. Interacts with TNFAIP6 (via both Link and CUB domains). The soluble form derives from the membrane form by proteolytic processing. In terms of tissue distribution, highly expressed in thymus and bone tissues.

It is found in the cell membrane. Its subcellular location is the secreted. Cytokine that binds to TNFRSF11B/OPG and to TNFRSF11A/RANK. Osteoclast differentiation and activation factor. Augments the ability of dendritic cells to stimulate naive T-cell proliferation. May be an important regulator of interactions between T-cells and dendritic cells and may play a role in the regulation of the T-cell-dependent immune response. May also play an important role in enhanced bone-resorption in humoral hypercalcemia of malignancy. Induces osteoclastogenesis by activating multiple signaling pathways in osteoclast precursor cells, chief among which is induction of long lasting oscillations in the intracellular concentration of Ca (2+) resulting in the activation of NFATC1, which translocates to the nucleus and induces osteoclast-specific gene transcription to allow differentiation of osteoclasts. During osteoclast differentiation, in a TMEM64 and ATP2A2-dependent manner induces activation of CREB1 and mitochondrial ROS generation necessary for proper osteoclast generation. The sequence is that of Tumor necrosis factor ligand superfamily member 11 (Tnfsf11) from Rattus norvegicus (Rat).